The following is a 1099-amino-acid chain: Mediator of RNA polymerase II transcription subunit 5 (1099 aa).

A disordered region spans residues 41-66; the sequence is DNDDAKTQEGSGSQDKTDVEESISKP.

It belongs to the Mediator complex subunit 5 family. In terms of assembly, component of the Mediator complex.

The protein localises to the nucleus. Component of the Mediator complex, a coactivator involved in the regulated transcription of nearly all RNA polymerase II-dependent genes. Mediator functions as a bridge to convey information from gene-specific regulatory proteins to the basal RNA polymerase II transcription machinery. Mediator is recruited to promoters by direct interactions with regulatory proteins and serves as a scaffold for the assembly of a functional preinitiation complex with RNA polymerase II and the general transcription factors. This is Mediator of RNA polymerase II transcription subunit 5 (NUT1) from Candida glabrata (strain ATCC 2001 / BCRC 20586 / JCM 3761 / NBRC 0622 / NRRL Y-65 / CBS 138) (Yeast).